The primary structure comprises 292 residues: Polyamine aminopropyltransferase 1 (292 aa).

The 244-residue stretch at 1 to 244 folds into the PABS domain; it reads MELGMFRLNI…YVNSFVFASD (244 aa). Position 35 (Q35) interacts with S-methyl-5'-thioadenosine. Positions 66 and 90 each coordinate spermidine. S-methyl-5'-thioadenosine is bound by residues D110 and 142-143; that span reads DG. D163 (proton acceptor) is an active-site residue.

The protein belongs to the spermidine/spermine synthase family. Homodimer or homotetramer.

It is found in the cytoplasm. The enzyme catalyses norspermine + S-adenosyl 3-(methylsulfanyl)propylamine = caldopentamine + S-methyl-5'-thioadenosine + 2 H(+). It carries out the reaction norspermidine + S-adenosyl 3-(methylsulfanyl)propylamine = norspermine + S-methyl-5'-thioadenosine + H(+). It catalyses the reaction S-adenosyl 3-(methylsulfanyl)propylamine + spermidine = thermospermine + S-methyl-5'-thioadenosine + H(+). Its function is as follows. Involved in the biosynthesis of polyamines which are thought to support the growth of thermophilic microorganisms under high-temperature conditions. It seems that long-chain and branched-chain of polyamines effectively stabilize DNA and RNA, respectively. Catalyzes the irreversible transfer of a propylamine group from the amino donor S-adenosylmethioninamine (decarboxy-AdoMet) to norspermidine, spermidine and norspermine to yield norspermine, thermospermine and caldopentamine, respectively. It can also synthesize sym-norspermidine (bis(3-aminopropyl)amine) from 1,3-diaminopropane with a very low activity. The biosynthesis of caldohexamine and caldoheptamine from caldopentamine has been also observed. The chain is Polyamine aminopropyltransferase 1 from Hyperthermus butylicus (strain DSM 5456 / JCM 9403 / PLM1-5).